Consider the following 263-residue polypeptide: Proteasome subunit alpha type-1 (263 aa).

M1 bears the N-acetylmethionine mark. S110 carries the phosphoserine; alternate modification. S110 carries O-linked (GlcNAc) serine; alternate glycosylation. Residue K115 forms a Glycyl lysine isopeptide (Lys-Gly) (interchain with G-Cter in ubiquitin) linkage. S177 carries the phosphoserine modification. Residue K208 forms a Glycyl lysine isopeptide (Lys-Gly) (interchain with G-Cter in ubiquitin) linkage. The disordered stretch occupies residues 232–263 (FLEGLEERPQRKAQPAQPADEPAEKADEPMEH). Positions 253–263 (PAEKADEPMEH) are enriched in basic and acidic residues.

This sequence belongs to the peptidase T1A family. The 26S proteasome consists of a 20S proteasome core and two 19S regulatory subunits. The 20S proteasome core is a barrel-shaped complex made of 28 subunits that are arranged in four stacked rings. The two outer rings are each formed by seven alpha subunits, and the two inner rings are formed by seven beta subunits. The proteolytic activity is exerted by three beta-subunits PSMB5, PSMB6 and PSMB7. Interacts with NOTCH3. Interacts with ZFAND1.

The protein resides in the cytoplasm. It is found in the nucleus. In terms of biological role, component of the 20S core proteasome complex involved in the proteolytic degradation of most intracellular proteins. This complex plays numerous essential roles within the cell by associating with different regulatory particles. Associated with two 19S regulatory particles, forms the 26S proteasome and thus participates in the ATP-dependent degradation of ubiquitinated proteins. The 26S proteasome plays a key role in the maintenance of protein homeostasis by removing misfolded or damaged proteins that could impair cellular functions, and by removing proteins whose functions are no longer required. Associated with the PA200 or PA28, the 20S proteasome mediates ubiquitin-independent protein degradation. This type of proteolysis is required in several pathways including spermatogenesis (20S-PA200 complex) or generation of a subset of MHC class I-presented antigenic peptides (20S-PA28 complex). The protein is Proteasome subunit alpha type-1 of Homo sapiens (Human).